The sequence spans 403 residues: D-galactonate dehydratase family member ManD (403 aa).

Substrate-binding residues include Asn-37 and His-122. Tyr-159 serves as the catalytic Proton donor/acceptor. Residue Asp-211 participates in Mg(2+) binding. The active-site Proton donor/acceptor is His-213. Residues Glu-237 and Glu-263 each coordinate Mg(2+). Residues Glu-263, Arg-284, His-313, Asp-317, and Glu-340 each contribute to the substrate site.

Belongs to the mandelate racemase/muconate lactonizing enzyme family. GalD subfamily. Mg(2+) is required as a cofactor.

The enzyme catalyses D-mannonate = 2-dehydro-3-deoxy-D-gluconate + H2O. It catalyses the reaction D-gluconate = 2-dehydro-3-deoxy-D-gluconate + H2O. Has low dehydratase activity with D-mannonate and D-gluconate, suggesting that these are not physiological substrates and that it has no significant role in the in vivo degradation of these compounds. Has no detectable activity with a panel of 70 other acid sugars (in vitro). The polypeptide is D-galactonate dehydratase family member ManD (manD) (Chromohalobacter salexigens (strain ATCC BAA-138 / DSM 3043 / CIP 106854 / NCIMB 13768 / 1H11)).